The following is a 452-amino-acid chain: Bifunctional protein GlmU (452 aa).

Positions 1 to 226 (MNFSAVILAA…PIEVEGVNDR (226 aa)) are pyrophosphorylase. Residues 8-11 (LAAG), K22, Q73, 78-79 (GT), 100-102 (YGD), G137, E151, N166, and N224 each bind UDP-N-acetyl-alpha-D-glucosamine. Residue D102 coordinates Mg(2+). N224 is a binding site for Mg(2+). A linker region spans residues 227 to 247 (AQLARLERAYQAAQAQKLLEQ). The N-acetyltransferase stretch occupies residues 248 to 452 (GVMLRDPSRF…IANWQRPTKK (205 aa)). UDP-N-acetyl-alpha-D-glucosamine contacts are provided by R330 and K348. H360 serves as the catalytic Proton acceptor. The UDP-N-acetyl-alpha-D-glucosamine site is built by Y363 and N374. Residues A377, 383–384 (NY), S402, A420, and R437 contribute to the acetyl-CoA site.

This sequence in the N-terminal section; belongs to the N-acetylglucosamine-1-phosphate uridyltransferase family. The protein in the C-terminal section; belongs to the transferase hexapeptide repeat family. Homotrimer. Mg(2+) is required as a cofactor.

The protein localises to the cytoplasm. It catalyses the reaction alpha-D-glucosamine 1-phosphate + acetyl-CoA = N-acetyl-alpha-D-glucosamine 1-phosphate + CoA + H(+). The catalysed reaction is N-acetyl-alpha-D-glucosamine 1-phosphate + UTP + H(+) = UDP-N-acetyl-alpha-D-glucosamine + diphosphate. It participates in nucleotide-sugar biosynthesis; UDP-N-acetyl-alpha-D-glucosamine biosynthesis; N-acetyl-alpha-D-glucosamine 1-phosphate from alpha-D-glucosamine 6-phosphate (route II): step 2/2. Its pathway is nucleotide-sugar biosynthesis; UDP-N-acetyl-alpha-D-glucosamine biosynthesis; UDP-N-acetyl-alpha-D-glucosamine from N-acetyl-alpha-D-glucosamine 1-phosphate: step 1/1. It functions in the pathway bacterial outer membrane biogenesis; LPS lipid A biosynthesis. Its function is as follows. Catalyzes the last two sequential reactions in the de novo biosynthetic pathway for UDP-N-acetylglucosamine (UDP-GlcNAc). The C-terminal domain catalyzes the transfer of acetyl group from acetyl coenzyme A to glucosamine-1-phosphate (GlcN-1-P) to produce N-acetylglucosamine-1-phosphate (GlcNAc-1-P), which is converted into UDP-GlcNAc by the transfer of uridine 5-monophosphate (from uridine 5-triphosphate), a reaction catalyzed by the N-terminal domain. The protein is Bifunctional protein GlmU of Aliivibrio fischeri (strain ATCC 700601 / ES114) (Vibrio fischeri).